Reading from the N-terminus, the 423-residue chain is COP9 signalosome complex subunit 3 (423 aa).

The region spanning 197–365 is the PCI domain; sequence NFERALYFYE…GMVCFHDNPE (169 aa). The interval 403–423 is disordered; the sequence is FVQKSMGSQDDDSGSKPSSYS.

It belongs to the CSN3 family. Component of the CSN complex, probably composed of cops1, cops2, cops3, cops4, cops5, cops6, cops7, cops8 and cops9.

Its subcellular location is the cytoplasm. The protein resides in the nucleus. Functionally, component of the COP9 signalosome complex (CSN), a complex involved in various cellular and developmental processes. The CSN complex is an essential regulator of the ubiquitin (Ubl) conjugation pathway by mediating the deneddylation of the cullin subunits of E3 ligase complexes, leading to modify the Ubl ligase activity. In Xenopus tropicalis (Western clawed frog), this protein is COP9 signalosome complex subunit 3 (cops3).